Reading from the N-terminus, the 162-residue chain is UPF0102 protein Bpet0439 (162 aa).

The interval 15-52 (QAQQRQMKRRRAAAHRAARGPAPARAPRASPTQRTGTA) is disordered. Over residues 20 to 32 (QMKRRRAAAHRAA) the composition is skewed to basic residues. A compositionally biased stretch (low complexity) spans 33–48 (RGPAPARAPRASPTQR).

The protein belongs to the UPF0102 family.

The chain is UPF0102 protein Bpet0439 from Bordetella petrii (strain ATCC BAA-461 / DSM 12804 / CCUG 43448).